Reading from the N-terminus, the 236-residue chain is GCN5-related N-acetyltransferase 8 (236 aa).

The 140-residue stretch at 96–235 (ATITSSPSPD…DALEAFDQVN (140 aa)) folds into the N-acetyltransferase domain. Acetyl-CoA-binding positions include 161 to 163 (IFV), 169 to 174 (RKGFGS), 200 to 202 (NVN), and Y207. Y207 serves as the catalytic Proton donor.

This sequence belongs to the acetyltransferase family. GNAT subfamily. As to quaternary structure, oligomer. In terms of tissue distribution, expressed throughout the plant.

The protein resides in the cytoplasm. Its subcellular location is the nucleus. It catalyses the reaction an N-terminal L-alpha-aminoacyl-[protein] + acetyl-CoA = N-terminal N(alpha)-acetyl-L-alpha-aminoacyl-[protein] + CoA + H(+). The enzyme catalyses L-lysyl-[protein] + acetyl-CoA = N(6)-acetyl-L-lysyl-[protein] + CoA + H(+). In terms of biological role, probable protein acetyltransferase with dual specificity triggering both N-alpha-acetylation (NTA) and epsilon-lysine acetylation (KA). This chain is GCN5-related N-acetyltransferase 8, found in Arabidopsis thaliana (Mouse-ear cress).